A 1154-amino-acid polypeptide reads, in one-letter code: Coiled-coil domain-containing protein 136 (1154 aa).

The tract at residues 1-48 is disordered; the sequence is MQAMEGEVLLPALYEEEEEEEEEEEEVEEEEEQVQKGGSVGSLSVNKH. Residues 14-32 are compositionally biased toward acidic residues; the sequence is YEEEEEEEEEEEEVEEEEE. S52 is subject to Phosphoserine. 2 coiled-coil regions span residues 696 to 733 and 859 to 974; these read QAKQ…LQVQ and KLQA…RPSV. Residues 1031–1058 are compositionally biased toward basic and acidic residues; sequence DGLAKEEEKKEEMEEEKKQVKEEAKEQC. A disordered region spans residues 1031–1131; sequence DGLAKEEEKK…SSPTPNPPIF (101 aa). The segment covering 1077 to 1109 has biased composition (acidic residues); it reads DQEENEEDKEEEEKEEDSEEEEDDADSSLESPE. The helical transmembrane segment at 1130–1150 threads the bilayer; sequence IFSLPLVGLVVISALLWCWWA.

As to expression, expressed in gastric tissues. Down-regulated in gastric cancer.

The protein resides in the cytoplasmic vesicle. Its subcellular location is the secretory vesicle. It is found in the acrosome membrane. May play a role in acrosome formation in spermatogenesis and in fertilization. The polypeptide is Coiled-coil domain-containing protein 136 (CCDC136) (Homo sapiens (Human)).